A 155-amino-acid chain; its full sequence is S-ribosylhomocysteine lyase (155 aa).

Residues histidine 58, histidine 62, and cysteine 125 each contribute to the Fe cation site.

This sequence belongs to the LuxS family. As to quaternary structure, homodimer. Fe cation is required as a cofactor.

It carries out the reaction S-(5-deoxy-D-ribos-5-yl)-L-homocysteine = (S)-4,5-dihydroxypentane-2,3-dione + L-homocysteine. Functionally, involved in the synthesis of autoinducer 2 (AI-2) which is secreted by bacteria and is used to communicate both the cell density and the metabolic potential of the environment. The regulation of gene expression in response to changes in cell density is called quorum sensing. Catalyzes the transformation of S-ribosylhomocysteine (RHC) to homocysteine (HC) and 4,5-dihydroxy-2,3-pentadione (DPD). This chain is S-ribosylhomocysteine lyase, found in Chromohalobacter salexigens (strain ATCC BAA-138 / DSM 3043 / CIP 106854 / NCIMB 13768 / 1H11).